The chain runs to 1273 residues: Chitin synthase 7 (1273 aa).

Positions 1 to 69 (MPAVERNAPF…LINPSSGGPG (69 aa)) are disordered. Residues 1-79 (MPAVERNAPF…FSAASRSKHR (79 aa)) are Cytoplasmic-facing. The chain crosses the membrane as a helical span at residues 80-100 (FSWWTAFSLFVTFWAPSPLLS). At 101–117 (SCCGLKDKQSRQAWREK) the chain is on the extracellular side. A helical transmembrane segment spans residues 118–138 (VSLVFIAILLGGFIGFITMGL). Residues 139–360 (NAALCPSASS…FISNLVLYCS (222 aa)) lie on the Cytoplasmic side of the membrane. A helical membrane pass occupies residues 361 to 381 (LVVILAIVLIRFFMAVWFAWF). At 382–820 (MAGRMSSPPR…LCGTFCFSMQ (439 aa)) the chain is on the extracellular side. Asn412 is a glycosylation site (N-linked (GlcNAc...) asparagine). The disordered stretch occupies residues 416 to 451 (AAPWANKQRPPPSQPARRRRDSAQSATPSVPDSLSV). 2 N-linked (GlcNAc...) asparagine glycosylation sites follow: Asn667 and Asn796. The chain crosses the membrane as a helical span at residues 821–841 (FVVFMDLLGTAVLPISIALTY). Residues 842 to 857 (TLVVTYCLNPPHSFTE) lie on the Cytoplasmic side of the membrane. A helical membrane pass occupies residues 858 to 878 (AIPLMLLVAVIGMPALLILLA). Residues 879–881 (TRK) lie on the Extracellular side of the membrane. A helical membrane pass occupies residues 882–902 (VVYVLWMLIYLLALPVWNFVL). The Cytoplasmic segment spans residues 903-1273 (PVYSFWHFDD…RGRSYHDRFS (371 aa)). 2 disordered regions span residues 966–1009 (RELE…SVTV) and 1126–1273 (NGGG…DRFS). A compositionally biased stretch (low complexity) spans 1000–1009 (SDSFSDSVTV). The segment covering 1215 to 1232 (QHPPQPSQPPQPPQPAQP) has biased composition (pro residues). A compositionally biased stretch (low complexity) spans 1233–1246 (TRPGGAPAAPPRGA).

Belongs to the chitin synthase family. Class IV subfamily.

The protein resides in the cell membrane. Its subcellular location is the cytoplasmic vesicle membrane. The catalysed reaction is [(1-&gt;4)-N-acetyl-beta-D-glucosaminyl](n) + UDP-N-acetyl-alpha-D-glucosamine = [(1-&gt;4)-N-acetyl-beta-D-glucosaminyl](n+1) + UDP + H(+). Functionally, polymerizes chitin, a structural polymer of the cell wall and septum, by transferring the sugar moiety of UDP-GlcNAc to the non-reducing end of the growing chitin polymer. In Mycosarcoma maydis (Corn smut fungus), this protein is Chitin synthase 7.